Here is a 379-residue protein sequence, read N- to C-terminus: Homoserine O-succinyltransferase (379 aa).

An AB hydrolase-1 domain is found at 48 to 357 (NAVLICHALS…SAHGHDAFLM (310 aa)). Serine 154 acts as the Nucleophile in catalysis. Position 224 (arginine 224) interacts with substrate. Residues aspartate 319 and histidine 352 contribute to the active site. Aspartate 353 contributes to the substrate binding site.

The protein belongs to the AB hydrolase superfamily. MetX family. In terms of assembly, homodimer.

It localises to the cytoplasm. The enzyme catalyses L-homoserine + succinyl-CoA = O-succinyl-L-homoserine + CoA. Its pathway is amino-acid biosynthesis; L-methionine biosynthesis via de novo pathway; O-succinyl-L-homoserine from L-homoserine: step 1/1. Its function is as follows. Transfers a succinyl group from succinyl-CoA to L-homoserine, forming succinyl-L-homoserine. This is Homoserine O-succinyltransferase from Neisseria meningitidis serogroup A / serotype 4A (strain DSM 15465 / Z2491).